Consider the following 410-residue polypeptide: Putative ribonuclease E (410 aa).

The S1 motif domain occupies serine 39–phenylalanine 119. Mg(2+) is bound by residues aspartate 303 and aspartate 346.

The protein belongs to the RNase E/G family. RNase E subfamily. As to quaternary structure, component of the RNA degradosome, which is a multiprotein complex involved in RNA processing and mRNA degradation. Within the RNA degradosome, RNase E assembles into a homotetramer formed by a dimer of dimers. It depends on Mg(2+) as a cofactor.

The protein resides in the cytoplasm. It localises to the cell inner membrane. The enzyme catalyses Endonucleolytic cleavage of single-stranded RNA in A- and U-rich regions.. In terms of biological role, endoribonuclease that plays a central role in RNA processing and decay. Required for the maturation of 5S and 16S rRNAs and the majority of tRNAs. Also involved in the degradation of most mRNAs. This Buchnera aphidicola subsp. Baizongia pistaciae (strain Bp) protein is Putative ribonuclease E (rne).